The following is a 393-amino-acid chain: UDP-sulfoquinovose synthase (393 aa).

NAD(+) is bound by residues 31-35, 74-75, Arg-100, and Asn-118; these read DNLST and DI. Position 100 (Arg-100) interacts with substrate. Positions 144 and 182 each coordinate substrate. Residue Thr-144 is part of the active site. The NAD(+) site is built by Tyr-182 and Lys-186. Tyr-182 acts as the Proton acceptor in catalysis. Lys-186 is an active-site residue. A substrate-binding site is contributed by Gln-209. Val-212 provides a ligand contact to NAD(+). Substrate-binding positions include 238 to 241, 253 to 255, and 326 to 328; these read VVNR, TVY, and RVE.

This sequence belongs to the NAD(P)-dependent epimerase/dehydratase family. Requires NAD(+) as cofactor.

It catalyses the reaction sulfite + UDP-alpha-D-glucose + H(+) = UDP-alpha-D-6-sulfoquinovose + H2O. Its function is as follows. Catalyzes the biosynthesis of UDP-sulfoquinovose by the transfer of sulfite to UDP-glucose. Important for the assembly of the S-layer N-glycans. The reaction probably occurs through an NAD(+)-dependent oxidation/dehydration/enolization/sulfite addition process. In vitro, in the absence of sulfite, UDP-D-glucose is converted via UDP-4-keto-D-glucose to UDP-D-glucose-5,6-ene. The polypeptide is UDP-sulfoquinovose synthase (Sulfolobus acidocaldarius (strain ATCC 33909 / DSM 639 / JCM 8929 / NBRC 15157 / NCIMB 11770)).